Here is a 119-residue protein sequence, read N- to C-terminus: Protein Wnt-4 (119 aa).

The O-palmitoleoyl serine; by PORCN moiety is linked to residue Ser1. 2 cysteine pairs are disulfide-bonded: Cys69/Cys100 and Cys85/Cys95. Asn86 carries N-linked (GlcNAc...) asparagine glycosylation.

This sequence belongs to the Wnt family. Post-translationally, palmitoleoylation is required for efficient binding to frizzled receptors. Depalmitoleoylation leads to Wnt signaling pathway inhibition.

Its subcellular location is the secreted. It localises to the extracellular space. The protein resides in the extracellular matrix. Ligand for members of the frizzled family of seven transmembrane receptors. Plays an important role in embryonic development. This chain is Protein Wnt-4 (WNT-4), found in Sceloporus occidentalis (Western fence lizard).